A 349-amino-acid polypeptide reads, in one-letter code: Spermidine/putrescine import ATP-binding protein PotA (349 aa).

The region spanning 7–237 (IELKGITKSY…PANSFVAKFI (231 aa)) is the ABC transporter domain. An ATP-binding site is contributed by 39–46 (GPSGCGKT).

The protein belongs to the ABC transporter superfamily. Spermidine/putrescine importer (TC 3.A.1.11.1) family. In terms of assembly, the complex is composed of two ATP-binding proteins (PotA), two transmembrane proteins (PotB and PotC) and a solute-binding protein (PotD).

It localises to the cell membrane. It carries out the reaction ATP + H2O + polyamine-[polyamine-binding protein]Side 1 = ADP + phosphate + polyamineSide 2 + [polyamine-binding protein]Side 1.. Functionally, part of the ABC transporter complex PotABCD involved in spermidine/putrescine import. Responsible for energy coupling to the transport system. This chain is Spermidine/putrescine import ATP-binding protein PotA, found in Clostridium perfringens (strain SM101 / Type A).